The sequence spans 222 residues: Large ribosomal subunit protein uL4 (222 aa).

The protein belongs to the universal ribosomal protein uL4 family. In terms of assembly, part of the 50S ribosomal subunit.

In terms of biological role, one of the primary rRNA binding proteins, this protein initially binds near the 5'-end of the 23S rRNA. It is important during the early stages of 50S assembly. It makes multiple contacts with different domains of the 23S rRNA in the assembled 50S subunit and ribosome. Forms part of the polypeptide exit tunnel. This is Large ribosomal subunit protein uL4 from Chlamydia trachomatis serovar L2 (strain ATCC VR-902B / DSM 19102 / 434/Bu).